The sequence spans 131 residues: Small ribosomal subunit protein uS8 (131 aa).

It belongs to the universal ribosomal protein uS8 family. As to quaternary structure, part of the 30S ribosomal subunit. Contacts proteins S5 and S12.

In terms of biological role, one of the primary rRNA binding proteins, it binds directly to 16S rRNA central domain where it helps coordinate assembly of the platform of the 30S subunit. The chain is Small ribosomal subunit protein uS8 from Nitrosomonas europaea (strain ATCC 19718 / CIP 103999 / KCTC 2705 / NBRC 14298).